The following is a 617-amino-acid chain: Phenylalanine--tRNA ligase beta subunit (617 aa).

A B5 domain is found at isoleucine 306 to lysine 383. 4 residues coordinate Mg(2+): aspartate 361, aspartate 367, glutamate 370, and aspartate 371.

The protein belongs to the phenylalanyl-tRNA synthetase beta subunit family. Type 2 subfamily. Tetramer of two alpha and two beta subunits. It depends on Mg(2+) as a cofactor.

It localises to the cytoplasm. The enzyme catalyses tRNA(Phe) + L-phenylalanine + ATP = L-phenylalanyl-tRNA(Phe) + AMP + diphosphate + H(+). The sequence is that of Phenylalanine--tRNA ligase beta subunit (phesB) from Dictyostelium discoideum (Social amoeba).